Reading from the N-terminus, the 933-residue chain is 2-oxoglutarate dehydrogenase E1 component (933 aa).

Belongs to the alpha-ketoglutarate dehydrogenase family. Homodimer. Part of the 2-oxoglutarate dehydrogenase (OGDH) complex composed of E1 (2-oxoglutarate dehydrogenase), E2 (dihydrolipoamide succinyltransferase) and E3 (dihydrolipoamide dehydrogenase); the complex contains multiple copies of the three enzymatic components (E1, E2 and E3). Interacts (via N-terminus) with SucB, the E2 component of OGDH complex. Thiamine diphosphate serves as cofactor.

It carries out the reaction N(6)-[(R)-lipoyl]-L-lysyl-[protein] + 2-oxoglutarate + H(+) = N(6)-[(R)-S(8)-succinyldihydrolipoyl]-L-lysyl-[protein] + CO2. Its function is as follows. E1 component of the 2-oxoglutarate dehydrogenase (OGDH) complex which catalyzes the decarboxylation of 2-oxoglutarate, the first step in the conversion of 2-oxoglutarate to succinyl-CoA and CO(2). The polypeptide is 2-oxoglutarate dehydrogenase E1 component (sucA) (Escherichia coli O157:H7).